We begin with the raw amino-acid sequence, 124 residues long: Holo-[acyl-carrier-protein] synthase (124 aa).

2 residues coordinate Mg(2+): Asp8 and Glu55.

Belongs to the P-Pant transferase superfamily. AcpS family. Requires Mg(2+) as cofactor.

The protein localises to the cytoplasm. It carries out the reaction apo-[ACP] + CoA = holo-[ACP] + adenosine 3',5'-bisphosphate + H(+). Functionally, transfers the 4'-phosphopantetheine moiety from coenzyme A to a Ser of acyl-carrier-protein. The polypeptide is Holo-[acyl-carrier-protein] synthase (Desulfovibrio desulfuricans (strain ATCC 27774 / DSM 6949 / MB)).